A 132-amino-acid chain; its full sequence is Small ribosomal subunit protein uS11 (132 aa).

The tract at residues 108 to 132 (GRIEDVTPVPHDSCRPKGGRRGRRV) is disordered.

Belongs to the universal ribosomal protein uS11 family. As to quaternary structure, part of the 30S ribosomal subunit.

Its function is as follows. Located on the platform of the 30S subunit. The chain is Small ribosomal subunit protein uS11 from Methanoregula boonei (strain DSM 21154 / JCM 14090 / 6A8).